Reading from the N-terminus, the 333-residue chain is CRISPR-associated endonuclease Cas1 (333 aa).

Mn(2+) contacts are provided by glutamate 162, histidine 226, and glutamate 241.

Belongs to the CRISPR-associated endonuclease Cas1 family. In terms of assembly, homodimer, forms a heterotetramer with a Cas2 homodimer. Mg(2+) serves as cofactor. Requires Mn(2+) as cofactor.

Functionally, CRISPR (clustered regularly interspaced short palindromic repeat), is an adaptive immune system that provides protection against mobile genetic elements (viruses, transposable elements and conjugative plasmids). CRISPR clusters contain spacers, sequences complementary to antecedent mobile elements, and target invading nucleic acids. CRISPR clusters are transcribed and processed into CRISPR RNA (crRNA). Acts as a dsDNA endonuclease. Involved in the integration of spacer DNA into the CRISPR cassette. The chain is CRISPR-associated endonuclease Cas1 from Nanoarchaeum equitans (strain Kin4-M).